The sequence spans 820 residues: MTHKLTPMMQQWHQCKEQAGDCLLLFRLGEFYEAFFDDALILAQNLDITLTQRQNVPMSGIPATCLDGYVDRLVSRGFKVAIAEQADNTEGSKGLVPRTINRLITPGALLSSSLLPEKANNYVLAINQVGSLYGLSCLDLSIGTFLVAEYDNTKDLIEAICRLAPTELLSHAKFYQKNEAVIKQLQQHLRITLSEYVSWAFEYQSATKKLYTCFQVSSLDGFGLQGLVPAINAAGALLSYIQDKLLLPISHLSIPKIYGQQKHLLIDKASQTNLELLSPIHGEHRKGSLLQVMERTSTPMGGRLLRNTLINPFYDLKEITLRQDSVEFFLQQADLRKILKRQLSCVRDLERLATKISTSLATPKDIGTLRDSLLSCTHIADNLQNCALPEFLENKFLIAPPLCSLIKTLSTELIQELPLKVSEGNIFANHYHPDLLRLRNIKENSKSWILEYQERIRNETGIKKLKVCYAQALGYYIEVASNLAPQLPKEFIRRQSRLHAERFTTQELQQFQDEVFSVEDKLQTLETKLFKELCFYIVEHRDLILKLSTAVADLDYVVSLAELAAEYDYRRPLVDHSDALSITKGMHPVALTLLDKGTFIPNDTVMHSAQTRMILLTGPNMAGKSTYIRQIALLVIMAQMGSFIPARSAHIGIVDKIFTRIGAGDNLSKGMSTFMVEMAETANILHNATDRSLVILDEIGRGTSTYDGLAIAQAVVEFLLFTDGKKAKTLFATHYKELTELEMHCQHVENFHAMVKENSGQPIFMYEIVKGHSKKSFGIHVAKLAGFPLSVVSRAQQILHQFEGPDLRPEPEKAQQLVMF.

618 to 625 (GPNMAGKS) lines the ATP pocket.

This sequence belongs to the DNA mismatch repair MutS family.

Its function is as follows. This protein is involved in the repair of mismatches in DNA. It is possible that it carries out the mismatch recognition step. This protein has a weak ATPase activity. This is DNA mismatch repair protein MutS from Chlamydia trachomatis serovar A (strain ATCC VR-571B / DSM 19440 / HAR-13).